The sequence spans 279 residues: Polyamine aminopropyltransferase (279 aa).

Residues 4-237 (IEWYPRGYGV…SPWAFLVGIK (234 aa)) form the PABS domain. Glutamine 29 is a binding site for S-methyl-5'-thioadenosine. Spermidine-binding residues include histidine 60 and aspartate 84. S-methyl-5'-thioadenosine-binding positions include glutamate 104 and 141–142 (DG). The active-site Proton acceptor is aspartate 158. 158-161 (DSTD) is a spermidine binding site. Proline 165 provides a ligand contact to S-methyl-5'-thioadenosine.

The protein belongs to the spermidine/spermine synthase family. In terms of assembly, homodimer or homotetramer.

The protein localises to the cytoplasm. It catalyses the reaction S-adenosyl 3-(methylsulfanyl)propylamine + putrescine = S-methyl-5'-thioadenosine + spermidine + H(+). Its pathway is amine and polyamine biosynthesis; spermidine biosynthesis; spermidine from putrescine: step 1/1. Catalyzes the irreversible transfer of a propylamine group from the amino donor S-adenosylmethioninamine (decarboxy-AdoMet) to putrescine (1,4-diaminobutane) to yield spermidine. This is Polyamine aminopropyltransferase from Pyrococcus abyssi (strain GE5 / Orsay).